The sequence spans 1365 residues: Nuclear pore complex protein Nup154 (1365 aa).

A required for binding to Nup93-1 and anchoring to the nuclear pore complex region spans residues 1–508 (MTLPQAQLDF…GTHIIEVLKM (508 aa)). Residues 508–986 (MVDVLRQILL…KSINPLKGTA (479 aa)) form a required for binding to chromatin region.

Belongs to the non-repetitive/WGA-negative nucleoporin family. As to quaternary structure, interacts (via N-terminus) with Nup93-1. Interacts with Nup35. Interacts with cup.

The protein resides in the nucleus. It is found in the nuclear pore complex. It localises to the chromosome. The protein localises to the nucleus membrane. Its subcellular location is the cytoplasm. In terms of biological role, component of the nuclear pore complex. Has a role in the organization of the inner nuclear membrane proteins at the nuclear envelope. In germ cells, plays a role in the nuclear localization of components of the dpp signaling pathways, such as Medea and phosphorylated Mad. Binds to chromatin, and together with Nup62 and Nup93-1, contributes to karyosome morphology and chromatin organization including attachment to the nuclear envelope in oocytes and nurse cells. Has a role in female fertility including egg chamber development; in nurse cells, has a role in the organization of F-actin in subcortical and cytoplasmic actin filaments important for the transfer of cytoplasm from nurse cells to the growing oocytes. Has a role in male spermatogenesis and fertility. Has a role in germ line cell proliferation. The polypeptide is Nuclear pore complex protein Nup154 (Drosophila melanogaster (Fruit fly)).